The following is a 38-amino-acid chain: Large ribosomal subunit protein bL12 (38 aa).

It belongs to the bacterial ribosomal protein bL12 family. As to quaternary structure, homodimer. Part of the ribosomal stalk of the 50S ribosomal subunit. Forms a multimeric L10(L12)X complex, where L10 forms an elongated spine to which 2 to 4 L12 dimers bind in a sequential fashion. Binds GTP-bound translation factors.

In terms of biological role, forms part of the ribosomal stalk which helps the ribosome interact with GTP-bound translation factors. Is thus essential for accurate translation. The sequence is that of Large ribosomal subunit protein bL12 (rplL) from Salinivibrio costicola (Vibrio costicola).